Here is a 563-residue protein sequence, read N- to C-terminus: BOS complex subunit NCLN (563 aa).

Residues 1-42 (MLEEAGEVLENVLKASCLPLGFIVFLPAVLLLVAPPLPAADA) form the signal peptide. The Lumenal portion of the chain corresponds to 43–522 (AHEFTVYRMQ…VMNAYRVKPA (480 aa)). Asn241 and Asn428 each carry an N-linked (GlcNAc...) asparagine glycan. The helical transmembrane segment at 523-543 (IFDLLLALCIGAYLGMAYTAV) threads the bilayer. Residues 544 to 563 (QHFHVLYKTVQRLLLKAKAQ) lie on the Cytoplasmic side of the membrane.

Belongs to the nicastrin family. Component of the back of Sec61 (BOS) complex, composed of NCLN/Nicalin, NOMO1 and TMEM147. The BOS complex is part of the multi-pass translocon (MPT) complex, composed of three subcomplexes, the GEL complex (composed of RAB5IF/OPTI and TMCO1), the BOS complex (composed of NCLN/Nicalin, NOMO1 and TMEM147) and the PAT complex (composed of WDR83OS/Asterix and CCDC47). The MPT complex associates with the SEC61 complex.

Its subcellular location is the endoplasmic reticulum membrane. Its function is as follows. Component of the multi-pass translocon (MPT) complex that mediates insertion of multi-pass membrane proteins into the lipid bilayer of membranes. The MPT complex takes over after the SEC61 complex: following membrane insertion of the first few transmembrane segments of proteins by the SEC61 complex, the MPT complex occludes the lateral gate of the SEC61 complex to promote insertion of subsequent transmembrane regions. May antagonize Nodal signaling and subsequent organization of axial structures during mesodermal patterning, via its interaction with NOMO. In Mus musculus (Mouse), this protein is BOS complex subunit NCLN (Ncln).